Consider the following 242-residue polypeptide: 1-(5-phosphoribosyl)-5-[(5-phosphoribosylamino)methylideneamino] imidazole-4-carboxamide isomerase (242 aa).

D10 functions as the Proton acceptor in the catalytic mechanism.

Belongs to the HisA/HisF family.

It localises to the cytoplasm. It carries out the reaction 1-(5-phospho-beta-D-ribosyl)-5-[(5-phospho-beta-D-ribosylamino)methylideneamino]imidazole-4-carboxamide = 5-[(5-phospho-1-deoxy-D-ribulos-1-ylimino)methylamino]-1-(5-phospho-beta-D-ribosyl)imidazole-4-carboxamide. Its pathway is amino-acid biosynthesis; L-histidine biosynthesis; L-histidine from 5-phospho-alpha-D-ribose 1-diphosphate: step 4/9. The chain is 1-(5-phosphoribosyl)-5-[(5-phosphoribosylamino)methylideneamino] imidazole-4-carboxamide isomerase from Corynebacterium diphtheriae (strain ATCC 700971 / NCTC 13129 / Biotype gravis).